Consider the following 134-residue polypeptide: UPF0412 protein YaaI (134 aa).

Positions 1–23 (MKSVFTLSASLAISLLLCCTAQA) are cleaved as a signal peptide.

Belongs to the UPF0412 family.

The chain is UPF0412 protein YaaI from Escherichia coli (strain SMS-3-5 / SECEC).